A 527-amino-acid polypeptide reads, in one-letter code: Zinc finger C2HC domain-containing protein 1C (527 aa).

2 disordered regions span residues 18 to 105 and 145 to 170; these read HNKT…GQGK and VHRK…LPDS. Residues 50–61 show a composition bias toward polar residues; that stretch reads NSFQSKLWSNTE. The span at 71 to 85 shows a compositional bias: basic residues; sequence RPKRNVCTKARRHSC. A compositionally biased stretch (low complexity) spans 93–102; sequence QQGSGNNAQG. Positions 207-254 form a coiled coil; that stretch reads TQIQRLEAAGESLQKEIRRKEILLQEKLKKTEEGLRRMQKEKKQAIFQ. Disordered regions lie at residues 264 to 316 and 352 to 379; these read LPRR…LSDY and LGST…EPEL. Residues 286–298 show a composition bias toward basic and acidic residues; that stretch reads FRSEVFSRNRGED. The segment covering 301–312 has biased composition (polar residues); the sequence is CDQAQENPSPRQ. Positions 358–374 are enriched in low complexity; that stretch reads ESSRSGTPGSSGSSSST. 2 C2HC/C3H-type zinc fingers span residues 378-407 and 489-518; these read ELAK…MQGS and DYVQ…IKNR. Positions 382, 385, 397, 401, 493, 496, 508, and 512 each coordinate Zn(2+). The disordered stretch occupies residues 507 to 527; that stretch reads RHIPKCKTIKNRPPPPRRHDS.

The protein belongs to the ZC2HC1 family. Requires Zn(2+) as cofactor.

This is Zinc finger C2HC domain-containing protein 1C (Zc2hc1c) from Mus musculus (Mouse).